The following is a 202-amino-acid chain: Large ribosomal subunit protein uL4 (202 aa).

Residues Gly40 to Ala71 form a disordered region. Polar residues predominate over residues Ser44 to Val53.

Belongs to the universal ribosomal protein uL4 family. Part of the 50S ribosomal subunit.

In terms of biological role, one of the primary rRNA binding proteins, this protein initially binds near the 5'-end of the 23S rRNA. It is important during the early stages of 50S assembly. It makes multiple contacts with different domains of the 23S rRNA in the assembled 50S subunit and ribosome. Functionally, forms part of the polypeptide exit tunnel. This Hahella chejuensis (strain KCTC 2396) protein is Large ribosomal subunit protein uL4.